An 896-amino-acid polypeptide reads, in one-letter code: Desmocollin-3 (896 aa).

The signal sequence occupies residues 1-26 (MAAPGSGAPCAELCRQLLLTLVVFSF). The propeptide occupies 27–134 (ACEACKKEIF…KETVLRRSKR (108 aa)). Cadherin domains follow at residues 135–242 (RWAP…HPIF), 243–354 (TEAV…LPTF), 355–471 (RQNA…GPEC), 472–579 (SPEV…EILQ), and 580–690 (DYLV…ILGK). Residues 135–690 (RWAPIPCSMQ…RRSADVILGK (556 aa)) lie on the Extracellular side of the membrane. A glycan (N-linked (GlcNAc...) asparagine) is linked at Asn-165. Residues Asn-391, Asn-546, and Asn-629 are each glycosylated (N-linked (GlcNAc...) asparagine). Residues 691–711 (WAILAILLGIALLFSILLTLV) form a helical membrane-spanning segment. Residues 712–896 (CGIVSARNKK…AALAKTCTKR (185 aa)) lie on the Cytoplasmic side of the membrane.

May form homodimers. Interacts with DSG1; there is evidence to suggest that the interaction promotes cell-cell adhesion of keratinocytes. Expressed in stratified epithelia only, such as the epidermis, tongue, esophagus and rumen (at protein level).

The protein localises to the cell membrane. The protein resides in the cell junction. Its subcellular location is the desmosome. It is found in the cytoplasm. Its function is as follows. A component of desmosome cell-cell junctions which are required for positive regulation of cellular adhesion. Required for cell-cell adhesion in the epidermis, as a result required for the maintenance of the dermal cohesion and the dermal barrier function. Required for cell-cell adhesion of epithelial cell layers surrounding the telogen hair club, as a result plays an important role in telogen hair shaft anchorage. Essential for successful completion of embryo compaction and embryo development. The polypeptide is Desmocollin-3 (DSC3) (Bos taurus (Bovine)).